Here is a 382-residue protein sequence, read N- to C-terminus: Secreted triacylglycerol lipase LIP5 (382 aa).

Cys40 and Cys211 are disulfide-bonded. A glycan (N-linked (GlcNAc...) asparagine) is linked at Asn115. The active-site Nucleophile is Ser124. Asn157 and Asn232 each carry an N-linked (GlcNAc...) asparagine glycan. Residues Asp271 and His305 contribute to the active site. N-linked (GlcNAc...) asparagine glycosylation occurs at Asn346.

This sequence belongs to the AB hydrolase superfamily. Lipase family. Class Lip subfamily.

The protein resides in the secreted. It catalyses the reaction a triacylglycerol + H2O = a diacylglycerol + a fatty acid + H(+). It carries out the reaction a monoacylglycerol + H2O = glycerol + a fatty acid + H(+). The catalysed reaction is a diacylglycerol + H2O = a monoacylglycerol + a fatty acid + H(+). Its function is as follows. Secreted lipase that hydrolyzes acylglycerol lipids such as triacylglycerols and consequently releases free fatty acid. Can hydrolyze 4-nitrophenyl palmitate to release 4-nitrophenol and palmitoic acid. Due to an absence of fatty acid synthase genes in Malassezia species, secretory lipases are essential for the yeast to generate free fatty acids from degradation of sebum and assimilate them as lipid sources for growth. Plays important roles not only in lipid metabolism but also in the immune response of host cells and pathogenesis. The chain is Secreted triacylglycerol lipase LIP5 from Malassezia furfur (Pityriasis versicolor infection agent).